A 206-amino-acid chain; its full sequence is Small ribosomal subunit protein uS4 (206 aa).

A disordered region spans residues Ala23 to Asp47. An S4 RNA-binding domain is found at Arg94–Val157.

The protein belongs to the universal ribosomal protein uS4 family. In terms of assembly, part of the 30S ribosomal subunit. Contacts protein S5. The interaction surface between S4 and S5 is involved in control of translational fidelity.

One of the primary rRNA binding proteins, it binds directly to 16S rRNA where it nucleates assembly of the body of the 30S subunit. Functionally, with S5 and S12 plays an important role in translational accuracy. This chain is Small ribosomal subunit protein uS4, found in Paracoccus denitrificans (strain Pd 1222).